We begin with the raw amino-acid sequence, 573 residues long: Pyrophosphate--fructose 6-phosphate 1-phosphotransferase (573 aa).

Residue Gly-90 participates in diphosphate binding. Asp-184 contacts Mg(2+). Substrate-binding positions include 212–214 (TID), 251–252 (KY), 259–261 (MGR), Glu-320, and 434–437 (YEGR). Asp-214 (proton acceptor) is an active-site residue.

This sequence belongs to the phosphofructokinase type A (PFKA) family. PPi-dependent PFK group II subfamily. Clade 'Long' sub-subfamily. Homodimer. It depends on Mg(2+) as a cofactor.

It localises to the cytoplasm. The enzyme catalyses beta-D-fructose 6-phosphate + diphosphate = beta-D-fructose 1,6-bisphosphate + phosphate + H(+). The protein operates within carbohydrate degradation; glycolysis; D-glyceraldehyde 3-phosphate and glycerone phosphate from D-glucose: step 3/4. Non-allosteric. Its function is as follows. Catalyzes the phosphorylation of D-fructose 6-phosphate, the first committing step of glycolysis. Uses inorganic phosphate (PPi) as phosphoryl donor instead of ATP like common ATP-dependent phosphofructokinases (ATP-PFKs), which renders the reaction reversible, and can thus function both in glycolysis and gluconeogenesis. Consistently, PPi-PFK can replace the enzymes of both the forward (ATP-PFK) and reverse (fructose-bisphosphatase (FBPase)) reactions. This is Pyrophosphate--fructose 6-phosphate 1-phosphotransferase from Treponema pallidum (strain Nichols).